A 377-amino-acid chain; its full sequence is Nitric oxide reductase FlRd-NAD(+) reductase (377 aa).

Belongs to the FAD-dependent oxidoreductase family. Requires FAD as cofactor.

The protein localises to the cytoplasm. It catalyses the reaction 2 reduced [nitric oxide reductase rubredoxin domain] + NAD(+) + H(+) = 2 oxidized [nitric oxide reductase rubredoxin domain] + NADH. It participates in nitrogen metabolism; nitric oxide reduction. Its function is as follows. One of at least two accessory proteins for anaerobic nitric oxide (NO) reductase. Reduces the rubredoxin moiety of NO reductase. This Escherichia fergusonii (strain ATCC 35469 / DSM 13698 / CCUG 18766 / IAM 14443 / JCM 21226 / LMG 7866 / NBRC 102419 / NCTC 12128 / CDC 0568-73) protein is Nitric oxide reductase FlRd-NAD(+) reductase.